The primary structure comprises 159 residues: Small ribosomal subunit protein uS4 (159 aa).

The 53-residue stretch at 106–158 folds into the S4 RNA-binding domain; the sequence is RRLQTIVYRMGLAKSIHHARQLIVHGHVAVAGRRVTSPGFLVPRELEDKISLI.

Belongs to the universal ribosomal protein uS4 family. In terms of assembly, part of the 30S ribosomal subunit. Contacts protein S5. The interaction surface between S4 and S5 is involved in control of translational fidelity.

One of the primary rRNA binding proteins, it binds directly to 16S rRNA where it nucleates assembly of the body of the 30S subunit. Its function is as follows. With S5 and S12 plays an important role in translational accuracy. This Pyrobaculum aerophilum (strain ATCC 51768 / DSM 7523 / JCM 9630 / CIP 104966 / NBRC 100827 / IM2) protein is Small ribosomal subunit protein uS4.